A 142-amino-acid polypeptide reads, in one-letter code: Transcription antitermination protein NusB (142 aa).

It belongs to the NusB family.

Its function is as follows. Involved in transcription antitermination. Required for transcription of ribosomal RNA (rRNA) genes. Binds specifically to the boxA antiterminator sequence of the ribosomal RNA (rrn) operons. The chain is Transcription antitermination protein NusB from Roseiflexus castenholzii (strain DSM 13941 / HLO8).